The primary structure comprises 613 residues: Nuclear receptor subfamily 1 group D member 1 (613 aa).

A compositionally biased stretch (polar residues) spans 1–48 (MTTLDSNNNTGGVITYIGSSGSSPNRTSPESLYSDSSNGSFQSLTQGC). The required for phosphorylation by CSNK1E and cytoplasmic localization stretch occupies residues 1–70 (MTTLDSNNNT…TQDPARSFGS (70 aa)). The disordered stretch occupies residues 1–102 (MTTLDSNNNT…SSFYNGSPPG (102 aa)). The modulating stretch occupies residues 1–129 (MTTLDSNNNT…TSNITKLNGM (129 aa)). The interval 49-285 (PTYFPPSPTG…PPRSPSPEPT (237 aa)) is crucial for activation of GJA1. Ser-55 and Ser-59 each carry phosphoserine; by GSK3-beta. Positions 69–102 (GSIPPSLGDDGSPSSSSSSSSSSSSSFYNGSPPG) are enriched in low complexity. Residues 130–206 (VLLCKVCGDV…VGMSRDAVRF (77 aa)) constitute a DNA-binding region (nuclear receptor). 2 NR C4-type zinc fingers span residues 133–153 (CKVCGDVASGFHYGVHACEGC) and 170–194 (CLKNENCSIVRINRNRCQQCRFKKC). N6-acetyllysine; by KAT5 occurs at positions 192 and 193. Positions 233–286 (SSQCPLETPPTQHPTPGPMGPSPPPAPAPSPLVGFSQFPQQLTPPRSPSPEPTV) are disordered. Over residues 239–262 (ETPPTQHPTPGPMGPSPPPAPAPS) the composition is skewed to pro residues. Position 275 is a phosphothreonine; by CDK1 (Thr-275). Residues 285-613 (TVEDVISQVA…KLLSFRVDAQ (329 aa)) enclose the NR LBD domain. Cys-417 provides a ligand contact to heme. At Lys-590 the chain carries N6-acetyllysine. Residue His-601 coordinates heme.

It belongs to the nuclear hormone receptor family. NR1 subfamily. Binds DNA as a monomer or a homodimer. Interacts with C1D, SP1 and ZNHIT1. Interacts with OPHN1 (via C-terminus). Interacts with PER2; the interaction associates PER2 to BMAL1 promoter region. Interacts with CRY1. Interacts with CCAR2. Interacts with NR2E3. Interacts with SIAH2. Interacts with FBXW7 and CDK1. Interacts with HUWE1. Interacts with NR0B2. Interacts with NFIL3. Interacts (via domain NR LBD) with HSP90AA1 and HSP90AB1. Ubiquitinated, leading to its proteasomal degradation. Ubiquitinated by the SCF(FBXW7) complex when phosphorylated by CDK1 leading to its proteasomal degradation. Ubiquitinated by SIAH2; leading to its proteasomal degradation. Rapidly ubiquitinated in response to inflammatory triggers and sumoylation is a prerequisite to its ubiquitination. In terms of processing, sumoylated by UBE2I, desumoylated by SENP1, and sumoylation is a prerequisite to its ubiquitination. Post-translationally, phosphorylated by CSNK1E; phosphorylation enhances its cytoplasmic localization. Undergoes lysosome-mediated degradation in a time-dependent manner in the liver. In terms of tissue distribution, expressed in all tissues and cell lines examined. Expressed at high levels in some squamous carcinoma cell lines.

Its subcellular location is the nucleus. The protein localises to the cytoplasm. The protein resides in the cell projection. It localises to the dendrite. It is found in the dendritic spine. Functionally, transcriptional repressor which coordinates circadian rhythm and metabolic pathways in a heme-dependent manner. Integral component of the complex transcription machinery that governs circadian rhythmicity and forms a critical negative limb of the circadian clock by directly repressing the expression of core clock components BMAL1, CLOCK and CRY1. Also regulates genes involved in metabolic functions, including lipid and bile acid metabolism, adipogenesis, gluconeogenesis and the macrophage inflammatory response. Acts as a receptor for heme which stimulates its interaction with the NCOR1/HDAC3 corepressor complex, enhancing transcriptional repression. Recognizes two classes of DNA response elements within the promoter of its target genes and can bind to DNA as either monomers or homodimers, depending on the nature of the response element. Binds as a monomer to a response element composed of the consensus half-site motif 5'-[A/G]GGTCA-3' preceded by an A/T-rich 5' sequence (RevRE), or as a homodimer to a direct repeat of the core motif spaced by two nucleotides (RevDR-2). Acts as a potent competitive repressor of ROR alpha (RORA) function and regulates the levels of its ligand heme by repressing the expression of PPARGC1A, a potent inducer of heme synthesis. Regulates lipid metabolism by repressing the expression of APOC3 and by influencing the activity of sterol response element binding proteins (SREBPs); represses INSIG2 which interferes with the proteolytic activation of SREBPs which in turn govern the rhythmic expression of enzymes with key functions in sterol and fatty acid synthesis. Regulates gluconeogenesis via repression of G6PC1 and PEPCK and adipocyte differentiation via repression of PPARG. Regulates glucagon release in pancreatic alpha-cells via the AMPK-NAMPT-SIRT1 pathway and the proliferation, glucose-induced insulin secretion and expression of key lipogenic genes in pancreatic-beta cells. Positively regulates bile acid synthesis by increasing hepatic expression of CYP7A1 via repression of NR0B2 and NFIL3 which are negative regulators of CYP7A1. Modulates skeletal muscle oxidative capacity by regulating mitochondrial biogenesis and autophagy; controls mitochondrial biogenesis and respiration by interfering with the STK11-PRKAA1/2-SIRT1-PPARGC1A signaling pathway. Represses the expression of SERPINE1/PAI1, an important modulator of cardiovascular disease and the expression of inflammatory cytokines and chemokines in macrophages. Represses gene expression at a distance in macrophages by inhibiting the transcription of enhancer-derived RNAs (eRNAs). Plays a role in the circadian regulation of body temperature and negatively regulates thermogenic transcriptional programs in brown adipose tissue (BAT); imposes a circadian oscillation in BAT activity, increasing body temperature when awake and depressing thermogenesis during sleep. In concert with NR2E3, regulates transcriptional networks critical for photoreceptor development and function. In addition to its activity as a repressor, can also act as a transcriptional activator. In the ovarian granulosa cells acts as a transcriptional activator of STAR which plays a role in steroid biosynthesis. In collaboration with SP1, activates GJA1 transcription in a heme-independent manner. Represses the transcription of CYP2B10, CYP4A10 and CYP4A14. Represses the transcription of CES2. Represses and regulates the circadian expression of TSHB in a NCOR1-dependent manner. Negatively regulates the protein stability of NR3C1 and influences the time-dependent subcellular distribution of NR3C1, thereby affecting its transcriptional regulatory activity. Plays a critical role in the circadian control of neutrophilic inflammation in the lung; under resting, non-stress conditions, acts as a rhythmic repressor to limit inflammatory activity whereas in the presence of inflammatory triggers undergoes ubiquitin-mediated degradation thereby relieving inhibition of the inflammatory response. Plays a key role in the circadian regulation of microglial activation and neuroinflammation; suppresses microglial activation through the NF-kappaB pathway in the central nervous system. Plays a role in the regulation of the diurnal rhythms of lipid and protein metabolism in the skeletal muscle via transcriptional repression of genes controlling lipid and amino acid metabolism in the muscle. The sequence is that of Nuclear receptor subfamily 1 group D member 1 (NR1D1) from Bos taurus (Bovine).